The primary structure comprises 93 residues: Small ribosomal subunit protein uS15 (93 aa).

This sequence belongs to the universal ribosomal protein uS15 family. As to quaternary structure, part of the 30S ribosomal subunit. Forms a bridge to the 50S subunit in the 70S ribosome, contacting the 23S rRNA.

One of the primary rRNA binding proteins, it binds directly to 16S rRNA where it helps nucleate assembly of the platform of the 30S subunit by binding and bridging several RNA helices of the 16S rRNA. Its function is as follows. Forms an intersubunit bridge (bridge B4) with the 23S rRNA of the 50S subunit in the ribosome. This chain is Small ribosomal subunit protein uS15, found in Anaplasma phagocytophilum (strain HZ).